A 194-amino-acid polypeptide reads, in one-letter code: Cysteine and glycine-rich protein 2 (194 aa).

The LIM zinc-binding 1 domain occupies 10-61 (CGACGRTVYHAEEVQCDGRSFHRCCFLCMVCRKNLDSTTVAIHDAEVYCKSC). The Nuclear localization signal motif lies at 64 to 69 (KKYGPK). The disordered stretch occupies residues 85–110 (GERLGIKPESSPSPHRPTTNPNTSKF). A compositionally biased stretch (polar residues) spans 94-110 (SSPSPHRPTTNPNTSKF). Positions 120 to 171 (CSRCGDSVYAAEKVIGAGKPWHKNCFRCAKCGKSLESTTLTEKEGEIYCKGC) constitute an LIM zinc-binding 2 domain.

The protein resides in the nucleus. Interacts with zyxin. May be a component of a signal transduction pathway that mediates adhesion-stimulated changes in gene expression. Totally down-regulated in transformed cells. This chain is Cysteine and glycine-rich protein 2 (CSRP2), found in Coturnix japonica (Japanese quail).